A 430-amino-acid chain; its full sequence is Adenylosuccinate synthetase (430 aa).

GTP contacts are provided by residues 12–18 (GDEGKGK) and 40–42 (GHT). The Proton acceptor role is filled by D13. Mg(2+) is bound by residues D13 and G40. Residues 13 to 16 (DEGK), 38 to 41 (NAGH), T129, R143, Q224, T239, and R303 contribute to the IMP site. The active-site Proton donor is the H41. Position 299–305 (299–305 (TVSNRER)) interacts with substrate. GTP-binding positions include R305, 331–333 (KLD), and 413–415 (STG).

Belongs to the adenylosuccinate synthetase family. As to quaternary structure, homodimer. Mg(2+) serves as cofactor.

It localises to the cytoplasm. It catalyses the reaction IMP + L-aspartate + GTP = N(6)-(1,2-dicarboxyethyl)-AMP + GDP + phosphate + 2 H(+). It participates in purine metabolism; AMP biosynthesis via de novo pathway; AMP from IMP: step 1/2. Its function is as follows. Plays an important role in the de novo pathway of purine nucleotide biosynthesis. Catalyzes the first committed step in the biosynthesis of AMP from IMP. The protein is Adenylosuccinate synthetase of Ehrlichia ruminantium (strain Welgevonden).